Consider the following 102-residue polypeptide: Large ribosomal subunit protein bL21 (102 aa).

Belongs to the bacterial ribosomal protein bL21 family. In terms of assembly, part of the 50S ribosomal subunit. Contacts protein L20.

In terms of biological role, this protein binds to 23S rRNA in the presence of protein L20. The protein is Large ribosomal subunit protein bL21 of Listeria monocytogenes serotype 4b (strain CLIP80459).